The chain runs to 119 residues: Basic phospholipase A2 notexin (119 aa).

7 disulfides stabilise this stretch: Cys11-Cys71, Cys27-Cys118, Cys29-Cys45, Cys44-Cys99, Cys51-Cys92, Cys60-Cys85, and Cys78-Cys90. Tyr28, Gly30, and Gly32 together coordinate Ca(2+). The active site involves His48. Ca(2+) is bound at residue Asp49. Asp93 is an active-site residue.

It belongs to the phospholipase A2 family. Group I subfamily. D49 sub-subfamily. As to quaternary structure, monomer. Ca(2+) serves as cofactor. In terms of tissue distribution, expressed by the venom gland.

Its subcellular location is the secreted. The enzyme catalyses a 1,2-diacyl-sn-glycero-3-phosphocholine + H2O = a 1-acyl-sn-glycero-3-phosphocholine + a fatty acid + H(+). Snake venom phospholipase A2 (PLA2) that inhibits neuromuscular transmission by blocking acetylcholine release from the nerve termini. Is directly toxic to skeletal muscle upon local application in vivo (dystrophic effect). Also has direct nephrotoxicity in experimental mice; a single subcutaneous dose (1.38 ug/kg) produces renal tubular and glomerular damage within 24 hours. PLA2 catalyzes the calcium-dependent hydrolysis of the 2-acyl groups in 3-sn-phosphoglycerides. The polypeptide is Basic phospholipase A2 notexin (Notechis scutatus scutatus (Mainland tiger snake)).